A 195-amino-acid chain; its full sequence is Imidazoleglycerol-phosphate dehydratase (195 aa).

It belongs to the imidazoleglycerol-phosphate dehydratase family.

The protein resides in the cytoplasm. It catalyses the reaction D-erythro-1-(imidazol-4-yl)glycerol 3-phosphate = 3-(imidazol-4-yl)-2-oxopropyl phosphate + H2O. The protein operates within amino-acid biosynthesis; L-histidine biosynthesis; L-histidine from 5-phospho-alpha-D-ribose 1-diphosphate: step 6/9. The protein is Imidazoleglycerol-phosphate dehydratase of Cereibacter sphaeroides (strain ATCC 17029 / ATH 2.4.9) (Rhodobacter sphaeroides).